The chain runs to 221 residues: Fanconi anemia core complex-associated protein 24 (221 aa).

As to quaternary structure, belongs to the multisubunit FA complex composed of FANCA, FANCB, FANCC, FANCE, FANCF, FANCG, FANCL/PHF9, FANCM and FAAP24. Interacts with FANCM.

The protein localises to the nucleus. Its function is as follows. Plays a role in DNA repair through recruitment of the FA core complex to damaged DNA. Regulates FANCD2 monoubiquitination upon DNA damage. Induces chromosomal instability as well as hypersensitivity to DNA cross-linking agents, when repressed. Targets FANCM/FAAP24 complex to the DNA, preferentially to single strand DNA. The protein is Fanconi anemia core complex-associated protein 24 of Mus musculus (Mouse).